A 391-amino-acid chain; its full sequence is S-adenosylmethionine synthase (391 aa).

Residue histidine 14 coordinates ATP. Aspartate 16 contacts Mg(2+). K(+) is bound at residue glutamate 42. L-methionine contacts are provided by glutamate 55 and glutamine 98. The tract at residues 98–108 (QSADIAMGVDE) is flexible loop. Residues 172–174 (DGK), 238–239 (RF), aspartate 247, 253–254 (RK), alanine 270, and lysine 274 contribute to the ATP site. Residue aspartate 247 coordinates L-methionine. Lysine 278 serves as a coordination point for L-methionine.

This sequence belongs to the AdoMet synthase family. As to quaternary structure, homotetramer; dimer of dimers. Mg(2+) serves as cofactor. K(+) is required as a cofactor.

The protein localises to the cytoplasm. The catalysed reaction is L-methionine + ATP + H2O = S-adenosyl-L-methionine + phosphate + diphosphate. It participates in amino-acid biosynthesis; S-adenosyl-L-methionine biosynthesis; S-adenosyl-L-methionine from L-methionine: step 1/1. Catalyzes the formation of S-adenosylmethionine (AdoMet) from methionine and ATP. The overall synthetic reaction is composed of two sequential steps, AdoMet formation and the subsequent tripolyphosphate hydrolysis which occurs prior to release of AdoMet from the enzyme. In Clostridium acetobutylicum (strain ATCC 824 / DSM 792 / JCM 1419 / IAM 19013 / LMG 5710 / NBRC 13948 / NRRL B-527 / VKM B-1787 / 2291 / W), this protein is S-adenosylmethionine synthase.